The chain runs to 49 residues: Osteocalcin (49 aa).

The region spanning 1–47 is the Gla domain; that stretch reads YLDHGLGAPAPYVDPLEPKREVCELNPDCDELADQMGFQEAYRRFYG. Position 9 is a 4-hydroxyproline (P9). Residues E17, E21, E24, and D30 each coordinate Ca(2+). Residues E17, E21, and E24 each carry the 4-carboxyglutamate modification. C23 and C29 form a disulfide bridge.

It belongs to the osteocalcin/matrix Gla protein family. In terms of processing, gamma-carboxyglutamic acid residues are formed by vitamin K dependent carboxylation. These residues are essential for the binding of calcium.

It localises to the secreted. Functionally, the carboxylated form is one of the main organic components of the bone matrix, which constitutes 1-2% of the total bone protein: it acts as a negative regulator of bone formation and is required to limit bone formation without impairing bone resorption or mineralization. The carboxylated form binds strongly to apatite and calcium. The uncarboxylated form acts as a hormone secreted by osteoblasts, which regulates different cellular processes, such as energy metabolism, male fertility and brain development. Regulates of energy metabolism by acting as a hormone favoring pancreatic beta-cell proliferation, insulin secretion and sensitivity and energy expenditure. Uncarboxylated osteocalcin hormone also promotes testosterone production in the testes: acts as a ligand for G protein-coupled receptor GPRC6A at the surface of Leydig cells, initiating a signaling response that promotes the expression of enzymes required for testosterone synthesis in a CREB-dependent manner. Also acts as a regulator of brain development: osteocalcin hormone crosses the blood-brain barrier and acts as a ligand for GPR158 on neurons, initiating a signaling response that prevents neuronal apoptosis in the hippocampus, favors the synthesis of all monoamine neurotransmitters and inhibits that of gamma-aminobutyric acid (GABA). Osteocalcin also crosses the placenta during pregnancy and maternal osteocalcin is required for fetal brain development. This chain is Osteocalcin, found in Lama guanicoe (Guanaco).